Consider the following 349-residue polypeptide: Paired box protein Pax-4 (349 aa).

The segment at residues 5-131 (GLSSVNQLGG…SSINRVLRAL (127 aa)) is a DNA-binding region (paired). Residues 8–64 (SVNQLGGLFVNGRPLPLDTRQQIVQLAIRGMRPCDISRSLKVSNGCVSKILGRYYRT) form a PAI subdomain region. The tract at residues 83 to 131 (AVVARIAQLKDEYPALFAWEIQRQLCAEGLCTQDKAPSVSSINRVLRAL) is RED subdomain. The homeobox DNA-binding region spans 170 to 229 (SHRNRTIFSPGQAEALEKEFQRGQYPDSVVRGKLAAATSLPEDTVRVWFSNRRAKWRRQE). The segment at 278–349 (FCQLCWGAVP…APSTYYLHWP (72 aa)) is transcription repression.

The protein belongs to the paired homeobox family. Specifically expressed in pancreatic islets.

Its subcellular location is the nucleus. In terms of biological role, plays an important role in the differentiation and development of pancreatic islet beta cells. Transcriptional repressor that competes with PAX6 in binding to a common element in the glucagon, insulin and somatostatin promoters. This Rattus norvegicus (Rat) protein is Paired box protein Pax-4 (Pax4).